Here is a 223-residue protein sequence, read N- to C-terminus: UPF0758 protein Tgr7_0100 (223 aa).

The region spanning 102 to 223 is the MPN domain; the sequence is ALTSPDDTRR…LVSFAERGLL (122 aa). Positions 173, 175, and 186 each coordinate Zn(2+). The short motif at 173–186 is the JAMM motif element; that stretch reads HNHPSGVAEPSRSD.

This sequence belongs to the UPF0758 family.

The sequence is that of UPF0758 protein Tgr7_0100 from Thioalkalivibrio sulfidiphilus (strain HL-EbGR7).